Consider the following 180-residue polypeptide: MSNGIVAKRYAVALFKIAKEKHVLEMFEEELRLVQNVYEKNGELHSFLTQPNISKEQKKTFLANVFGSVSESILNTLYILIDNKRIDILSDIANEYVVLANEERNVADATVYSTRLLSEEEKLNIAEAFAKRTGKDAIRVKNVVDEDLLGGIKVRIGNRIYDGSLQGKLARIQRELMKNR.

It belongs to the ATPase delta chain family. In terms of assembly, F-type ATPases have 2 components, F(1) - the catalytic core - and F(0) - the membrane proton channel. F(1) has five subunits: alpha(3), beta(3), gamma(1), delta(1), epsilon(1). F(0) has three main subunits: a(1), b(2) and c(10-14). The alpha and beta chains form an alternating ring which encloses part of the gamma chain. F(1) is attached to F(0) by a central stalk formed by the gamma and epsilon chains, while a peripheral stalk is formed by the delta and b chains.

It localises to the cell membrane. F(1)F(0) ATP synthase produces ATP from ADP in the presence of a proton or sodium gradient. F-type ATPases consist of two structural domains, F(1) containing the extramembraneous catalytic core and F(0) containing the membrane proton channel, linked together by a central stalk and a peripheral stalk. During catalysis, ATP synthesis in the catalytic domain of F(1) is coupled via a rotary mechanism of the central stalk subunits to proton translocation. In terms of biological role, this protein is part of the stalk that links CF(0) to CF(1). It either transmits conformational changes from CF(0) to CF(1) or is implicated in proton conduction. The chain is ATP synthase subunit delta from Bacillus cereus (strain 03BB102).